Here is a 121-residue protein sequence, read N- to C-terminus: Peptidyl-tRNA hydrolase (121 aa).

The protein belongs to the PTH2 family.

It localises to the cytoplasm. The enzyme catalyses an N-acyl-L-alpha-aminoacyl-tRNA + H2O = an N-acyl-L-amino acid + a tRNA + H(+). Its function is as follows. The natural substrate for this enzyme may be peptidyl-tRNAs which drop off the ribosome during protein synthesis. In Sulfurisphaera tokodaii (strain DSM 16993 / JCM 10545 / NBRC 100140 / 7) (Sulfolobus tokodaii), this protein is Peptidyl-tRNA hydrolase.